The chain runs to 1378 residues: DNA-directed RNA polymerase subunit beta (1378 aa).

It belongs to the RNA polymerase beta chain family. In terms of assembly, the RNAP catalytic core consists of 2 alpha, 1 beta, 1 beta' and 1 omega subunit. When a sigma factor is associated with the core the holoenzyme is formed, which can initiate transcription.

The catalysed reaction is RNA(n) + a ribonucleoside 5'-triphosphate = RNA(n+1) + diphosphate. DNA-dependent RNA polymerase catalyzes the transcription of DNA into RNA using the four ribonucleoside triphosphates as substrates. This chain is DNA-directed RNA polymerase subunit beta, found in Hyphomonas neptunium (strain ATCC 15444).